The primary structure comprises 647 residues: DNA polymerase subunit gamma-1 (647 aa).

The disordered stretch occupies residues 116-147; the sequence is ERPGRAEQSQMQDEDGLPELVEESSQPSFHHG. Positions 127 to 137 are enriched in acidic residues; sequence QDEDGLPELVE.

This sequence belongs to the DNA polymerase type-A family. Heterotrimer composed of a catalytic subunit and a homodimer of accessory subunits. Interacts with TTC3. Mg(2+) is required as a cofactor.

The protein localises to the mitochondrion. The protein resides in the mitochondrion matrix. Its subcellular location is the mitochondrion nucleoid. The catalysed reaction is DNA(n) + a 2'-deoxyribonucleoside 5'-triphosphate = DNA(n+1) + diphosphate. Involved in the replication of mitochondrial DNA. Associates with mitochondrial DNA. The chain is DNA polymerase subunit gamma-1 (POLG) from Gallus gallus (Chicken).